Reading from the N-terminus, the 1019-residue chain is Mediator of replication checkpoint protein 1 (1019 aa).

Disordered regions lie at residues 1-33, 105-143, 166-202, 261-290, 443-683, and 965-1019; these read MASL…LDTP, QGGK…DRNS, NSAT…SDRK, EEEA…IVNS, IQGE…SKTF, and TQRP…SDFD. Positions 17 to 30 are enriched in acidic residues; the sequence is SDEASINDDQEDIL. Residues 177-191 are compositionally biased toward acidic residues; it reads LDSESADDSDLADES. Basic and acidic residues-rich tracts occupy residues 192 to 202, 271 to 281, and 454 to 468; these read ELSKKYTSDRK, NVEKEEPKPSV, and LERA…RQLE. The segment covering 476–486 has biased composition (acidic residues); the sequence is DEGELNDEEEV. Polar residues predominate over residues 487–503; sequence ISSSNTPSTKAKTTNKV. Residues 556–580 show a composition bias toward basic and acidic residues; that stretch reads MIRDSFDRLSSESIKDSQKTEELHD. Polar residues-rich tracts occupy residues 590 to 607 and 630 to 658; these read QSTS…SQLT and NTSS…IDSV. Residue S604 is modified to Phosphoserine. T645 is modified (phosphothreonine). A compositionally biased stretch (basic and acidic residues) spans 671-681; that stretch reads EERRESRRDSK.

Interacts with cds1. In terms of processing, phosphorylated by rad3 and tel1.

It localises to the nucleus. Component of the replisome and is required for rad3-dependent activation of the checkpoint kinase cds1 in response to replication fork arrest. Phosphorylation allows it to mediate the activation of cds1. The sequence is that of Mediator of replication checkpoint protein 1 (mrc1) from Schizosaccharomyces pombe (strain 972 / ATCC 24843) (Fission yeast).